The chain runs to 206 residues: Ribonuclease HII (206 aa).

The RNase H type-2 domain maps to 18–206 (LRIAGVDEVG…PVHNILYQEK (189 aa)). Positions 24, 25, and 115 each coordinate a divalent metal cation.

It belongs to the RNase HII family. The cofactor is Mn(2+). Requires Mg(2+) as cofactor.

The protein resides in the cytoplasm. It catalyses the reaction Endonucleolytic cleavage to 5'-phosphomonoester.. In terms of biological role, endonuclease that specifically degrades the RNA of RNA-DNA hybrids. This is Ribonuclease HII from Dinoroseobacter shibae (strain DSM 16493 / NCIMB 14021 / DFL 12).